The sequence spans 62 residues: Metallothionein-4 (62 aa).

A divalent metal cation is bound by residues cysteine 6, cysteine 8, cysteine 14, cysteine 16, cysteine 20, cysteine 22, cysteine 25, cysteine 27, cysteine 30, cysteine 34, cysteine 35, cysteine 37, cysteine 38, cysteine 42, cysteine 45, cysteine 49, cysteine 51, cysteine 58, cysteine 60, and cysteine 61.

It belongs to the metallothionein superfamily. Type 1 family.

Functionally, seems to bind zinc and copper. Could play a special role in regulating zinc metabolism during the differentiation of stratified epithelia. The chain is Metallothionein-4 (MT4) from Canis lupus familiaris (Dog).